A 561-amino-acid chain; its full sequence is Oxygen-dependent choline dehydrogenase (561 aa).

6-35 (DYIIIGAGSAGNVLATRLTEDADVSVLLLE) serves as a coordination point for FAD. H475 functions as the Proton acceptor in the catalytic mechanism.

Belongs to the GMC oxidoreductase family. The cofactor is FAD.

It carries out the reaction choline + A = betaine aldehyde + AH2. The enzyme catalyses betaine aldehyde + NAD(+) + H2O = glycine betaine + NADH + 2 H(+). Its pathway is amine and polyamine biosynthesis; betaine biosynthesis via choline pathway; betaine aldehyde from choline (cytochrome c reductase route): step 1/1. Its function is as follows. Involved in the biosynthesis of the osmoprotectant glycine betaine. Catalyzes the oxidation of choline to betaine aldehyde and betaine aldehyde to glycine betaine at the same rate. This Pseudomonas aeruginosa (strain UCBPP-PA14) protein is Oxygen-dependent choline dehydrogenase.